The following is an 84-amino-acid chain: Small ribosomal subunit protein uS17c (84 aa).

Belongs to the universal ribosomal protein uS17 family. As to quaternary structure, part of the 30S ribosomal subunit.

The protein localises to the plastid. The protein resides in the chloroplast. In terms of biological role, one of the primary rRNA binding proteins, it binds specifically to the 5'-end of 16S ribosomal RNA. The protein is Small ribosomal subunit protein uS17c (rps17) of Thalassiosira pseudonana (Marine diatom).